The primary structure comprises 740 residues: NAD(P)H-quinone oxidoreductase subunit 5, chloroplastic (740 aa).

The next 16 membrane-spanning stretches (helical) occupy residues Trp-9 to Phe-29, Trp-40 to Ile-60, Ile-89 to Ile-109, Phe-125 to Ile-145, Ile-147 to Thr-167, Gly-185 to Phe-205, Asn-219 to Ala-239, Thr-258 to Ala-278, Val-286 to Ala-306, Leu-327 to Ile-347, Ala-354 to Ser-374, Ile-396 to Ser-416, Trp-425 to Tyr-445, Leu-543 to Phe-563, Val-602 to Ile-622, and Ser-717 to Phe-737.

It belongs to the complex I subunit 5 family. NDH is composed of at least 16 different subunits, 5 of which are encoded in the nucleus.

The protein localises to the plastid. Its subcellular location is the chloroplast thylakoid membrane. The catalysed reaction is a plastoquinone + NADH + (n+1) H(+)(in) = a plastoquinol + NAD(+) + n H(+)(out). It catalyses the reaction a plastoquinone + NADPH + (n+1) H(+)(in) = a plastoquinol + NADP(+) + n H(+)(out). NDH shuttles electrons from NAD(P)H:plastoquinone, via FMN and iron-sulfur (Fe-S) centers, to quinones in the photosynthetic chain and possibly in a chloroplast respiratory chain. The immediate electron acceptor for the enzyme in this species is believed to be plastoquinone. Couples the redox reaction to proton translocation, and thus conserves the redox energy in a proton gradient. This Nicotiana sylvestris (Wood tobacco) protein is NAD(P)H-quinone oxidoreductase subunit 5, chloroplastic (ndhF).